Reading from the N-terminus, the 260-residue chain is MALPDFSMRQLLEAGIHFGHQTHRWNPKMAPYIYGARNNIHIIDLSQTVPLLHQALKQVSDTVAKGGRVLFVGTKRQASDIVADAAQRSAQYYVNSRWLGGMLTNWKTISNSIQRLRKLDEMLAGEAQGLTKKERLNLDREREKLDKALGGIKDMGSTPDLMFVIDTNKEAIAILEAKRLGIPVVAIIDSNCDPDKIDFPIPGNDDAARAIQLYCDLIAKAAIDGIARQQGALGVDIGASVEAPVEPALDPAPSTEAPQA.

The protein belongs to the universal ribosomal protein uS2 family.

In Mesorhizobium japonicum (strain LMG 29417 / CECT 9101 / MAFF 303099) (Mesorhizobium loti (strain MAFF 303099)), this protein is Small ribosomal subunit protein uS2.